The following is a 291-amino-acid chain: Phosphatidylglycerol--prolipoprotein diacylglyceryl transferase (291 aa).

The next 7 membrane-spanning stretches (helical) occupy residues 21–41 (VALH…MWLA), 60–80 (LLYA…VLFY), 96–116 (WDGG…MIIF), 130–150 (FIAP…FING), 198–218 (SQLY…NLFI), 225–245 (GAVS…VEFF), and 260–280 (ISMG…MMVW). Arg143 contacts a 1,2-diacyl-sn-glycero-3-phospho-(1'-sn-glycerol).

It belongs to the Lgt family.

The protein localises to the cell inner membrane. The enzyme catalyses L-cysteinyl-[prolipoprotein] + a 1,2-diacyl-sn-glycero-3-phospho-(1'-sn-glycerol) = an S-1,2-diacyl-sn-glyceryl-L-cysteinyl-[prolipoprotein] + sn-glycerol 1-phosphate + H(+). It functions in the pathway protein modification; lipoprotein biosynthesis (diacylglyceryl transfer). In terms of biological role, catalyzes the transfer of the diacylglyceryl group from phosphatidylglycerol to the sulfhydryl group of the N-terminal cysteine of a prolipoprotein, the first step in the formation of mature lipoproteins. The sequence is that of Phosphatidylglycerol--prolipoprotein diacylglyceryl transferase from Salmonella newport (strain SL254).